The chain runs to 251 residues: tRNA pseudouridine synthase A (251 aa).

The Nucleophile role is filled by D52. Y113 serves as a coordination point for substrate.

Belongs to the tRNA pseudouridine synthase TruA family. In terms of assembly, homodimer.

The enzyme catalyses uridine(38/39/40) in tRNA = pseudouridine(38/39/40) in tRNA. In terms of biological role, formation of pseudouridine at positions 38, 39 and 40 in the anticodon stem and loop of transfer RNAs. The chain is tRNA pseudouridine synthase A from Brucella abortus (strain 2308).